Consider the following 278-residue polypeptide: Putative ABC transporter ATP-binding protein MTBMA_c05830 (278 aa).

Residues 4–239 form the ABC transporter domain; it reads IEAVNIRYTY…IDTIRGADLR (236 aa). Position 37-44 (37-44) interacts with ATP; that stretch reads GPNGAGKS.

The protein belongs to the ABC transporter superfamily.

It localises to the cell membrane. Probably part of an ABC transporter complex. Responsible for energy coupling to the transport system. The polypeptide is Putative ABC transporter ATP-binding protein MTBMA_c05830 (Methanothermobacter marburgensis (strain ATCC BAA-927 / DSM 2133 / JCM 14651 / NBRC 100331 / OCM 82 / Marburg) (Methanobacterium thermoautotrophicum)).